Here is a 223-residue protein sequence, read N- to C-terminus: Large ribosomal subunit protein bL21 (223 aa).

Belongs to the bacterial ribosomal protein bL21 family. In terms of assembly, part of the 50S ribosomal subunit. Contacts protein L20.

This protein binds to 23S rRNA in the presence of protein L20. The chain is Large ribosomal subunit protein bL21 from Mesorhizobium japonicum (strain LMG 29417 / CECT 9101 / MAFF 303099) (Mesorhizobium loti (strain MAFF 303099)).